The sequence spans 66 residues: Large ribosomal subunit protein bL33c (66 aa).

It belongs to the bacterial ribosomal protein bL33 family.

It is found in the plastid. The protein resides in the chloroplast. The protein is Large ribosomal subunit protein bL33c of Gossypium barbadense (Sea Island cotton).